Consider the following 217-residue polypeptide: 3,4-dihydroxy-2-butanone 4-phosphate synthase (217 aa).

Residues 37–38 (RE), D42, 150–154 (RRGHT), and E174 contribute to the D-ribulose 5-phosphate site. E38 serves as a coordination point for Mg(2+). Mg(2+) is bound at residue H153.

The protein belongs to the DHBP synthase family. In terms of assembly, homodimer. It depends on Mg(2+) as a cofactor. The cofactor is Mn(2+).

The catalysed reaction is D-ribulose 5-phosphate = (2S)-2-hydroxy-3-oxobutyl phosphate + formate + H(+). Its pathway is cofactor biosynthesis; riboflavin biosynthesis; 2-hydroxy-3-oxobutyl phosphate from D-ribulose 5-phosphate: step 1/1. Its function is as follows. Catalyzes the conversion of D-ribulose 5-phosphate to formate and 3,4-dihydroxy-2-butanone 4-phosphate. The protein is 3,4-dihydroxy-2-butanone 4-phosphate synthase of Aeromonas salmonicida (strain A449).